The following is a 184-amino-acid chain: ATP synthase subunit b, chloroplastic (184 aa).

The helical transmembrane segment at 27–49 threads the bilayer; that stretch reads LATNPINLSVVLGVLIFFGKGVL.

The protein belongs to the ATPase B chain family. As to quaternary structure, F-type ATPases have 2 components, F(1) - the catalytic core - and F(0) - the membrane proton channel. F(1) has five subunits: alpha(3), beta(3), gamma(1), delta(1), epsilon(1). F(0) has four main subunits: a(1), b(1), b'(1) and c(10-14). The alpha and beta chains form an alternating ring which encloses part of the gamma chain. F(1) is attached to F(0) by a central stalk formed by the gamma and epsilon chains, while a peripheral stalk is formed by the delta, b and b' chains.

Its subcellular location is the plastid. The protein resides in the chloroplast thylakoid membrane. Functionally, f(1)F(0) ATP synthase produces ATP from ADP in the presence of a proton or sodium gradient. F-type ATPases consist of two structural domains, F(1) containing the extramembraneous catalytic core and F(0) containing the membrane proton channel, linked together by a central stalk and a peripheral stalk. During catalysis, ATP synthesis in the catalytic domain of F(1) is coupled via a rotary mechanism of the central stalk subunits to proton translocation. Its function is as follows. Component of the F(0) channel, it forms part of the peripheral stalk, linking F(1) to F(0). In Cuscuta exaltata (Tall dodder), this protein is ATP synthase subunit b, chloroplastic.